Reading from the N-terminus, the 230-residue chain is Ribonuclease 3 (230 aa).

An RNase III domain is found at 5 to 125; sequence YSRFYNILGY…VIGAIYLDSD (121 aa). Glu40 provides a ligand contact to Mg(2+). Asp44 is an active-site residue. Mg(2+) contacts are provided by Asp111 and Glu114. The active site involves Glu114. The region spanning 153–223 is the DRBM domain; it reads DSKSKLQEIL…AEKMIEMLSQ (71 aa).

It belongs to the ribonuclease III family. Homodimer. Mg(2+) is required as a cofactor.

Its subcellular location is the cytoplasm. It catalyses the reaction Endonucleolytic cleavage to 5'-phosphomonoester.. Its function is as follows. Digests double-stranded RNA. Involved in the processing of primary rRNA transcript to yield the immediate precursors to the large and small rRNAs (23S and 16S). Also processes some mRNAs, and tRNAs when they are encoded in the rRNA operon. Functionally, CRISPR (clustered regularly interspaced short palindromic repeat) is an adaptive immune system that provides protection against mobile genetic elements (viruses, transposable elements and conjugative plasmids). CRISPR clusters contain spacers, sequences complementary to antecedent mobile elements, and target invading nucleic acids. CRISPR clusters are transcribed and processed into CRISPR RNA (crRNA). In this organism endogenous ribonuclease 3 and Cas9 are required for correct coprocessing of pre-crRNA and the trans-encoded small RNA (tracrRNA). Cas9, crRNA and tracrRNA are required for cleavage of invading DNA. Complements pre-crRNA and tracrRNA coprocessing defects in an rnc deletion in S.pyogenes strain 370. This is Ribonuclease 3 from Francisella tularensis subsp. novicida (strain U112).